The chain runs to 432 residues: Selenocysteine lyase (432 aa).

The residue at position 1 (Met1) is an N-acetylmethionine. The disordered stretch occupies residues 1-20 (MDVARNGARGSVESPPNRKV). Phosphoserine is present on Ser117. Residue Lys247 is modified to N6-(pyridoxal phosphate)lysine. The active-site S-selanylcysteine intermediate is the Cys375.

It belongs to the class-V pyridoxal-phosphate-dependent aminotransferase family. In terms of assembly, homodimer. Requires pyridoxal 5'-phosphate as cofactor.

It is found in the cytoplasm. The protein localises to the cytosol. The enzyme catalyses L-selenocysteine + AH2 = hydrogenselenide + L-alanine + A + H(+). In terms of biological role, catalyzes the decomposition of L-selenocysteine to L-alanine and elemental selenium. In Rattus norvegicus (Rat), this protein is Selenocysteine lyase (Scly).